A 629-amino-acid polypeptide reads, in one-letter code: tRNA uridine 5-carboxymethylaminomethyl modification enzyme MnmG (629 aa).

FAD contacts are provided by residues 13–18 (GGGHAG), Val125, and Ser180. 273 to 287 (GPRYCPSIEDKVMRF) contacts NAD(+). Gln370 lines the FAD pocket.

The protein belongs to the MnmG family. Homodimer. Heterotetramer of two MnmE and two MnmG subunits. It depends on FAD as a cofactor.

The protein localises to the cytoplasm. Functionally, NAD-binding protein involved in the addition of a carboxymethylaminomethyl (cmnm) group at the wobble position (U34) of certain tRNAs, forming tRNA-cmnm(5)s(2)U34. This Salmonella dublin (strain CT_02021853) protein is tRNA uridine 5-carboxymethylaminomethyl modification enzyme MnmG.